We begin with the raw amino-acid sequence, 192 residues long: Protein GrpE (192 aa).

The tract at residues 1–34 (MSSKEQKTPNEQVSEEMENAAEQQVEATQETGEG) is disordered. Positions 21–31 (AEQQVEATQET) are enriched in polar residues.

Belongs to the GrpE family. As to quaternary structure, homodimer.

It is found in the cytoplasm. In terms of biological role, participates actively in the response to hyperosmotic and heat shock by preventing the aggregation of stress-denatured proteins, in association with DnaK and GrpE. It is the nucleotide exchange factor for DnaK and may function as a thermosensor. Unfolded proteins bind initially to DnaJ; upon interaction with the DnaJ-bound protein, DnaK hydrolyzes its bound ATP, resulting in the formation of a stable complex. GrpE releases ADP from DnaK; ATP binding to DnaK triggers the release of the substrate protein, thus completing the reaction cycle. Several rounds of ATP-dependent interactions between DnaJ, DnaK and GrpE are required for fully efficient folding. The chain is Protein GrpE from Yersinia enterocolitica serotype O:8 / biotype 1B (strain NCTC 13174 / 8081).